The chain runs to 339 residues: Cytochrome c biogenesis protein CcsA (339 aa).

The next 7 membrane-spanning stretches (helical) occupy residues 6-26, 37-57, 71-91, 97-117, 142-162, 247-267, and 281-299; these read LEHI…LVFW, IGSL…GLLL, LYES…VSEI, WLGI…TVGL, MMIP…ALLI, IISL…VWVN, and TWAL…IRMI.

Belongs to the CcmF/CycK/Ccl1/NrfE/CcsA family. In terms of assembly, may interact with Ccs1.

The protein resides in the plastid. The protein localises to the chloroplast thylakoid membrane. Required during biogenesis of c-type cytochromes (cytochrome c6 and cytochrome f) at the step of heme attachment. The polypeptide is Cytochrome c biogenesis protein CcsA (Anthoceros angustus (Hornwort)).